The sequence spans 200 residues: Inner membrane-spanning protein YciB (200 aa).

A run of 6 helical transmembrane segments spans residues 7–27 (HPLF…FVNA), 32–52 (FAAT…SYVV), 56–76 (IPLM…LTLV), 93–113 (LFAA…AIMF), 126–146 (ILTF…EIIW), and 153–173 (FWVG…AIAQ).

This sequence belongs to the YciB family.

It is found in the cell inner membrane. Plays a role in cell envelope biogenesis, maintenance of cell envelope integrity and membrane homeostasis. The sequence is that of Inner membrane-spanning protein YciB from Bradyrhizobium sp. (strain ORS 278).